The following is a 177-amino-acid chain: von Ebner gland protein 2 (177 aa).

The signal sequence occupies residues 1 to 18 (MKALLLTFSLSLLAALQA). Cysteine 80 and cysteine 172 form a disulfide bridge.

It belongs to the calycin superfamily. Lipocalin family. Homodimer.

It localises to the secreted. In terms of biological role, could play a role in taste reception. Could be necessary for the concentration and delivery of sapid molecules in the gustatory system. This Rattus norvegicus (Rat) protein is von Ebner gland protein 2 (Vegp2).